A 282-amino-acid polypeptide reads, in one-letter code: Putative hydrolase BamMC406_5393 (282 aa).

Mg(2+) contacts are provided by glutamate 124, glutamate 126, and aspartate 155.

This sequence belongs to the FAH family. Requires Mg(2+) as cofactor.

This is Putative hydrolase BamMC406_5393 from Burkholderia ambifaria (strain MC40-6).